The chain runs to 105 residues: U7-hexatoxin-Hi1a (105 aa).

A signal peptide spans 1-23 (MKTILLFLGVCAVGASMMTGGWT).

It belongs to the cystatin family. Post-translationally, contains 2 disulfide bonds. Expressed by the venom gland.

It is found in the secreted. Functionally, inhibits various C1 cysteine proteases. This protein has no toxic activity and its function in the venom is unknown. It may play a role as a housekeeping or regulatory protein. The polypeptide is U7-hexatoxin-Hi1a (Hadronyche infensa (Fraser island funnel-web spider)).